Here is a 481-residue protein sequence, read N- to C-terminus: Cytochrome P450 monooxygenase dpfgJ (481 aa).

A helical transmembrane segment spans residues 23-43; sequence LVFTQAAVIGSILFVFLLGLY. An N-linked (GlcNAc...) asparagine glycan is attached at Asn338. A heme-binding site is contributed by Cys427.

It belongs to the cytochrome P450 family. Requires heme as cofactor.

The protein resides in the membrane. It functions in the pathway secondary metabolite biosynthesis; terpenoid biosynthesis. Functionally, cytochrome P450 monooxygenase; part of the gene cluster that mediates the biosynthesis of diterpenoid pyrones. The first step of the pathway is the synthesis of the alpha-pyrone moiety by the polyketide synthase dpfgA via condensation of one acetyl-CoA starter unit with 3 malonyl-CoA units and 2 methylations. The alpha-pyrone is then combined with geranylgeranyl pyrophosphate (GGPP) formed by the GGPP synthase dpfgD through the action of the prenyltransferase dpfgC to yield a linear alpha-pyrone diterpenoid. Subsequent steps in the diterpenoid pyrone biosynthetic pathway involve the decalin core formation, which is initiated by the epoxidation of the C10-C11 olefin by the FAD-dependent oxidoreductase dpfgE, and is followed by a cyclization cascade catalyzed by the terpene cyclase dpfgB. The short chain dehydrogenase/reductase dpfgG then oxidizes the 8S hydroxy group to a ketone and the short chain dehydrogenase/reductase dpfgH reduces the ketone to the 8R hydroxy group to yield higginsianin B. Higginsianin B is further methylated by the methyltransferase dpfgI to produce the intermediate named FDDP B. The cytochrome P450 monooxygenase dfgpJ then catalyzes a three-step oxidation at C-27 to generate a carboxylic acid as well as C-26 hydroxylation. Finally, methyltransferase dpfgK methylates the carboxylic acid generated by dpfgJ, yielding the final diterpenoid pyrones from the pathway which were named FDDP D and FDDP E. This is Cytochrome P450 monooxygenase dpfgJ from Gibberella zeae (strain ATCC MYA-4620 / CBS 123657 / FGSC 9075 / NRRL 31084 / PH-1) (Wheat head blight fungus).